The primary structure comprises 376 residues: Fibromodulin (376 aa).

An N-terminal signal peptide occupies residues 1–18 (MQWASVLLLAGLCSLSQG). Q19 is subject to Pyrrolidone carboxylic acid. Sulfotyrosine occurs at positions 20, 38, 53, 55, 63, and 65. An LRRNT domain is found at 67-105 (APPPPEPRDCPQECDCPPNFPTAMYCDNRNLKYLPFVPS). LRR repeat units lie at residues 106–127 (RMKY…VFDN), 130–151 (GLLW…RKVF), 156–176 (HLER…PLPR), 177–198 (SLRE…ALEG), 201–222 (NLTA…MRGL), 224–245 (SLIL…LPSA), 246–266 (LEQL…YFRG), and 269–289 (KLLY…ATNT). N-linked (GlcNAc...) (keratan sulfate) asparagine glycosylation is present at N127. N166 carries N-linked (GlcNAc...) (keratan sulfate) asparagine glycosylation. N201 carries an N-linked (GlcNAc...) (keratan sulfate) asparagine glycan. The N-linked (GlcNAc...) (keratan sulfate) asparagine glycan is linked to N291. 2 LRR repeats span residues 294–315 (SLLE…NTNL) and 316–335 (ENLY…SFCT). A disulfide bond links C334 and C367. N341 carries an N-linked (GlcNAc...) asparagine glycan. The LRR 11 repeat unit spans residues 344–367 (KLQVLRLDGNEIKRSAMPVDAPLC).

It belongs to the small leucine-rich proteoglycan (SLRP) family. SLRP class II subfamily. As to quaternary structure, binds to type I and type II collagen. In terms of processing, binds keratan sulfate chains. Sulfated on tyrosine residue(s). Highest levels observed in knee epiphysis, in calvarial and diaphyseal bone, in nasal and costal cartilage, in the eye, and in bladder. In mature knee joint it is mostly present in the proliferating zone of growth plate. It is also observed in ligaments, especially at insertion sites, in the junction between meniscus and joint capsule, in the perimysium of skeletal muscle and in the periosteum.

Its subcellular location is the secreted. The protein localises to the extracellular space. It is found in the extracellular matrix. Its function is as follows. Affects the rate of fibrils formation. May have a primary role in collagen fibrillogenesis. The polypeptide is Fibromodulin (Fmod) (Mus musculus (Mouse)).